A 628-amino-acid polypeptide reads, in one-letter code: Probable potassium transport system protein Kup (628 aa).

A run of 12 helical transmembrane segments spans residues 20–40 (ALLTLGALGVVFGDIGTSPLY), 63–83 (IISMVLWTITLIVTVKYVMLV), 110–130 (FVAVAGMLGAALFYGDVVITP), 151–171 (FILPISLAVLIAIFAIQPLGT), 178–198 (FGPIMLLWFVTLAGLGIPQII), 212–232 (ALGLIVAEPFQAFVLLGAVVL), 256–276 (WFCVVMPALILTYLGQGALVI), 296–316 (IPLVILATIATVIASQAVISG), 346–366 (IYMPLVNGLLFVSVMVVVLVF), 375–395 (AYGLAVTGTLVLVSVLYLIYV), 398–418 (TWWKTALFIVFIGIPEVLLFA), and 422–442 (TKIHDGGWLPLLTAAVLIVVM).

Belongs to the HAK/KUP transporter (TC 2.A.72) family.

The protein resides in the cell membrane. It carries out the reaction K(+)(in) + H(+)(in) = K(+)(out) + H(+)(out). In terms of biological role, transport of potassium into the cell. Likely operates as a K(+):H(+) symporter. This chain is Probable potassium transport system protein Kup, found in Corynebacterium glutamicum (strain R).